The chain runs to 361 residues: Peptide chain release factor 1 (361 aa).

Position 235 is an N5-methylglutamine (Gln235). Positions 286–305 (IDSARSAERKQKVGSGDRSE) are disordered.

The protein belongs to the prokaryotic/mitochondrial release factor family. Post-translationally, methylated by PrmC. Methylation increases the termination efficiency of RF1.

The protein localises to the cytoplasm. In terms of biological role, peptide chain release factor 1 directs the termination of translation in response to the peptide chain termination codons UAG and UAA. The sequence is that of Peptide chain release factor 1 from Rhodopseudomonas palustris (strain HaA2).